The sequence spans 248 residues: Tyrosine recombinase XerD-like (248 aa).

Residues 1–72 form the Core-binding (CB) domain; that stretch reads MIAFIEPFLA…TVNQFLYYLY (72 aa). One can recognise a Tyr recombinase domain in the interval 92–248; sequence SLKPQLTRLD…PITLEKYYKM (157 aa). Arg213 is an active-site residue. The active-site O-(3'-phospho-DNA)-tyrosine intermediate is Tyr245.

Belongs to the 'phage' integrase family. XerD-like subfamily.

The protein resides in the cytoplasm. Putative tyrosine recombinase. Not involved in the cutting and rejoining of the recombining DNA molecules on dif(SL) site. The chain is Tyrosine recombinase XerD-like from Streptococcus equi subsp. zooepidemicus (strain H70).